The following is a 434-amino-acid chain: Pre-mRNA-splicing factor PRP46 (434 aa).

WD repeat units lie at residues 120–160 (GHTG…LKIT), 163–202 (GHVMSVRDIAISKRHPYMFSASEDKLVKCWDLERNTAIRD), 205–244 (GHLSGVHTVDVHPSLDIIATAGRDAVVRLWDIRSRSEIMV), 247–288 (GHKS…KVLT), 290–329 (HSRNIRDLTLHPAEFSFASVSTNDVRSWKLPEGQLLTNFQ), 331–369 (QNTGILNTVSINHDNVLLAGGDDGTLCFYDYKTGHKYQS), and 380–419 (ESERSILCSTFDVTGTRLITGEGDKSIKIWKQVPDATEDT).

This sequence belongs to the WD repeat PRL1/PRL2 family. As to quaternary structure, associated with the spliceosome.

The protein resides in the cytoplasm. The protein localises to the nucleus. Involved in pre-mRNA splicing and required for cell cycle progression at G2/M. This Kluyveromyces lactis (strain ATCC 8585 / CBS 2359 / DSM 70799 / NBRC 1267 / NRRL Y-1140 / WM37) (Yeast) protein is Pre-mRNA-splicing factor PRP46 (PRP46).